A 491-amino-acid polypeptide reads, in one-letter code: Glutamyl-tRNA(Gln) amidotransferase subunit A (491 aa).

Active-site charge relay system residues include K78 and S158. S182 serves as the catalytic Acyl-ester intermediate.

The protein belongs to the amidase family. GatA subfamily. Heterotrimer of A, B and C subunits.

The catalysed reaction is L-glutamyl-tRNA(Gln) + L-glutamine + ATP + H2O = L-glutaminyl-tRNA(Gln) + L-glutamate + ADP + phosphate + H(+). Its function is as follows. Allows the formation of correctly charged Gln-tRNA(Gln) through the transamidation of misacylated Glu-tRNA(Gln) in organisms which lack glutaminyl-tRNA synthetase. The reaction takes place in the presence of glutamine and ATP through an activated gamma-phospho-Glu-tRNA(Gln). The sequence is that of Glutamyl-tRNA(Gln) amidotransferase subunit A from Bradyrhizobium sp. (strain BTAi1 / ATCC BAA-1182).